Reading from the N-terminus, the 35-residue chain is Beta/omega-theraphotoxin-Bp1a (35 aa).

3 cysteine pairs are disulfide-bonded: Cys-2–Cys-16, Cys-9–Cys-21, and Cys-15–Cys-28.

This sequence belongs to the neurotoxin 10 (Hwtx-1) family. 54 (ProTx-1) subfamily. An unnatural amidation at Ser-35 provokes a 14-fold increased toxin ability to inhibit Nav1.2/SCN2A and a ~2-fold decreased toxin ability to inhibit both Nav1.5/SCN5A and Nav1.7/SCN9A. In terms of tissue distribution, expressed by the venom gland.

It is found in the secreted. Functionally, ion channel impairing toxin that inhibits voltage-gated calcium channel Cav3.1/CACNA1G (IC(50)=53 nM), voltage-gated potassium channels Kv2.1/KCNB1 (IC(50)=411 nM), all sodium channels tested (Nav1.2/SCN2A (IC(50)=60-104 nM), Nav1.5/SCN5A (IC(50)=76-358 nM), Nav1.6/SCN8A (IC(50)=21-133 nM), Nav1.7/SCN9A (IC(50)=51-95 nM), and Nav1.8/SCN10A) as well as the nociceptor cation channel TRPA1 (IC(50)=389 nM). Acts as a potent and selective blocker of voltage-gated calcium channel Cav3.1/CACNA1G, but not of Cav3.2/CACNA1H, and Cav3.3/CACNA1I. On Nav1.7/SCN9A, primarily interacts with the DII and DIV voltage-sensor domains. Also acts as an inhibitor of nociceptor cation channel TRPA1 (IC(50)~389 nM) by binding to the S1-S4 gating domain of TRPA1. It shows moderate affinity for lipid bilayers. The protein is Beta/omega-theraphotoxin-Bp1a of Bumba pulcherrimaklaasi (Tarantula spider).